Here is a 364-residue protein sequence, read N- to C-terminus: Cobalt-precorrin-5B C(1)-methyltransferase (364 aa).

Belongs to the CbiD family.

It catalyses the reaction Co-precorrin-5B + S-adenosyl-L-methionine = Co-precorrin-6A + S-adenosyl-L-homocysteine. It functions in the pathway cofactor biosynthesis; adenosylcobalamin biosynthesis; cob(II)yrinate a,c-diamide from sirohydrochlorin (anaerobic route): step 6/10. In terms of biological role, catalyzes the methylation of C-1 in cobalt-precorrin-5B to form cobalt-precorrin-6A. This is Cobalt-precorrin-5B C(1)-methyltransferase from Pseudomonas putida (strain ATCC 700007 / DSM 6899 / JCM 31910 / BCRC 17059 / LMG 24140 / F1).